The chain runs to 429 residues: Histidine--tRNA ligase (429 aa).

Belongs to the class-II aminoacyl-tRNA synthetase family. Homodimer.

Its subcellular location is the cytoplasm. It catalyses the reaction tRNA(His) + L-histidine + ATP = L-histidyl-tRNA(His) + AMP + diphosphate + H(+). This is Histidine--tRNA ligase from Prochlorococcus marinus (strain MIT 9515).